A 108-amino-acid polypeptide reads, in one-letter code: UPF0060 membrane protein Nwi_1459 (108 aa).

Transmembrane regions (helical) follow at residues 5-25, 31-51, 61-81, and 88-108; these read AAYVGAAIAEIAGCFAFWAWL, VWWLVPGMASLALFAYLLTLV, AAYGGIYIMASLGWLWSVEGI, and LAGALICLIGAVVILIGPHEI.

This sequence belongs to the UPF0060 family.

The protein resides in the cell inner membrane. The polypeptide is UPF0060 membrane protein Nwi_1459 (Nitrobacter winogradskyi (strain ATCC 25391 / DSM 10237 / CIP 104748 / NCIMB 11846 / Nb-255)).